A 199-amino-acid chain; its full sequence is Protein extra-macrochaetae (199 aa).

A bHLH domain is found at 23–75; the sequence is RIQRHPTHRGDGENAEMKMYLSKLKDLVPFMPKNRKLTKLEIIQHVIDYICDL. Ser-106 is subject to Phosphoserine. A disordered region spans residues 127–199; it reads RLNAEQPAKV…QNAEKDSRQS (73 aa). A compositionally biased stretch (low complexity) spans 161 to 182; that stretch reads QQHQQQQQLQLQQQQLQSQQQL.

Heterodimer with other HLH proteins.

It is found in the nucleus. Its function is as follows. Participates in sensory organ patterning by antagonizing the neurogenic activity of the Achaete-scute complex (AS-C). It lacks a basic DNA-binding domain but is able to form heterodimers with other HLH proteins, thereby inhibiting DNA binding. May sequester proneural proteins in complexes inefficient for DNA interaction. EMC also affects vein differentiation. Inhibits the activity of AS-C proteins by forming an non-DNA binding heterodimer. The sequence is that of Protein extra-macrochaetae (emc) from Drosophila melanogaster (Fruit fly).